Consider the following 160-residue polypeptide: Nucleotide-binding protein ASA_3207 (160 aa).

The protein belongs to the YajQ family.

Nucleotide-binding protein. The chain is Nucleotide-binding protein ASA_3207 from Aeromonas salmonicida (strain A449).